We begin with the raw amino-acid sequence, 257 residues long: Indole-3-glycerol phosphate synthase (257 aa).

The protein belongs to the TrpC family.

The enzyme catalyses 1-(2-carboxyphenylamino)-1-deoxy-D-ribulose 5-phosphate + H(+) = (1S,2R)-1-C-(indol-3-yl)glycerol 3-phosphate + CO2 + H2O. The protein operates within amino-acid biosynthesis; L-tryptophan biosynthesis; L-tryptophan from chorismate: step 4/5. This chain is Indole-3-glycerol phosphate synthase, found in Phenylobacterium zucineum (strain HLK1).